A 484-amino-acid chain; its full sequence is ATP-dependent RNA helicase DDX25 (484 aa).

Thr-49 is subject to Phosphothreonine. The short motif at 62-75 is the Nuclear export signal element; sequence LAANSLLNKLIRQS. The Q motif motif lies at 98–126; sequence KTFEELRLKEELLKGIYAMGFNRPSKIQE. Residues 101-115 carry the Nuclear localization signal motif; sequence EELRLKEELLKGIYA. Residues 131-301 enclose the Helicase ATP-binding domain; it reads MMLAHPPQNL…ERIIPDPNVI (171 aa). Residue 144 to 151 coordinates ATP; the sequence is SQSGTGKT. The DEAD box signature appears at 248-251; the sequence is DEAD. A Helicase C-terminal domain is found at 312–479; it reads NIRQYYVLCE…QLDPEDMDEI (168 aa).

The protein belongs to the DEAD box helicase family. Post-translationally, phosphorylated on threonine residues. The phosphorylated form is found in the cytoplasm but not in the nucleus. Isoform 1 is expressed in germ cells. Isoform 2 is expressed in Leydig cells and in round spermatids of adult testis upon gonadotropin stimulation.

It is found in the cytoplasm. It localises to the nucleus. It carries out the reaction ATP + H2O = ADP + phosphate + H(+). Functionally, ATP-dependent RNA helicase. Required for mRNA export and translation regulation during spermatid development. The sequence is that of ATP-dependent RNA helicase DDX25 (Ddx25) from Mus musculus (Mouse).